Consider the following 229-residue polypeptide: Transmembrane emp24 domain-containing protein 5 (229 aa).

The first 27 residues, 1–27 (MGVRMWLPFPMLLLSALPATLLSGAAG), serve as a signal peptide directing secretion. At 28-196 (FTPSLDSDFT…IQESNFDRVN (169 aa)) the chain is on the lumenal side. Positions 45-126 (KECFYQPMPL…EKVIFFELIL (82 aa)) constitute a GOLD domain. A helical transmembrane segment spans residues 197 to 217 (FWSVVNLMVMVVVSAIQVYTL). Residues 218 to 229 (KSLFEDKRKSRT) lie on the Cytoplasmic side of the membrane.

It belongs to the EMP24/GP25L family. In terms of assembly, interacts with TMED9 and TMED10.

It is found in the endoplasmic reticulum membrane. Its subcellular location is the golgi apparatus. It localises to the cis-Golgi network membrane. The protein localises to the endoplasmic reticulum-Golgi intermediate compartment membrane. Potential role in vesicular protein trafficking, mainly in the early secretory pathway. Required for the maintenance of the Golgi apparatus; involved in protein exchange between Golgi stacks during assembly. Probably not required for COPI-vesicle-mediated retrograde transport. The chain is Transmembrane emp24 domain-containing protein 5 (Tmed5) from Rattus norvegicus (Rat).